The primary structure comprises 144 residues: Large ribosomal subunit protein uL15 (144 aa).

A disordered region spans residues 1–58; sequence MRLNTLAPAAGSKHAPKRVGRGIGSGLGKTGGRGHKGQKSRSGGKVRPGFEGGQMPLK. Residues 21–31 show a composition bias toward gly residues; it reads RGIGSGLGKTG. Over residues 32–44 the composition is skewed to basic residues; it reads GRGHKGQKSRSGG.

This sequence belongs to the universal ribosomal protein uL15 family. In terms of assembly, part of the 50S ribosomal subunit.

Functionally, binds to the 23S rRNA. The protein is Large ribosomal subunit protein uL15 of Vibrio parahaemolyticus serotype O3:K6 (strain RIMD 2210633).